Consider the following 602-residue polypeptide: Sodium- and chloride-dependent GABA transporter 2 (602 aa).

Residues 1–13 show a composition bias toward polar residues; the sequence is MDSRVSGTTSNGE. The tract at residues 1 to 22 is disordered; sequence MDSRVSGTTSNGETKPVYPVME. At 1–40 the chain is on the cytoplasmic side; sequence MDSRVSGTTSNGETKPVYPVMEKKEEDGTLERGHWNNKME. 3 helical membrane passes run 41–61, 68–88, and 121–141; these read FVLS…FPYL, GAFF…VFLL, and IVIL…FYLF. Over 142-206 the chain is Extracellular; that stretch reads SSFTIDLPWG…GIQHLGALRW (65 aa). C153 and C162 are oxidised to a cystine. A glycan (N-linked (GlcNAc...) asparagine) is linked at N173. A run of 2 helical transmembrane segments spans residues 207-227 and 233-253; these read ELAL…WKGV and VVYF…IRGV. N269 carries an N-linked (GlcNAc...) asparagine glycan. Transmembrane regions (helical) follow at residues 282–302, 319–339, 366–386, 418–438, 453–473, 490–510, and 528–548; these read AGTQ…ALGS, FLNS…LGFM, VVML…VVLL, VLIL…LTEG, GMCL…VYGA, PLIK…TFLF, and WWGD…IPAW. Residues 549-602 are Cytoplasmic-facing; that stretch reads SLYRLGTLKGPFRERIRQLMCPAEDLPQRNPAGPSAPATPRTSLLRLTELESHC. T587 bears the Phosphothreonine mark. S591 bears the Phosphoserine mark.

It belongs to the sodium:neurotransmitter symporter (SNF) (TC 2.A.22) family. SLC6A13 subfamily. In terms of tissue distribution, expressed in brain, kidney, lung, liver and testis.

Its subcellular location is the cell membrane. It is found in the basolateral cell membrane. It carries out the reaction 4-aminobutanoate(out) + chloride(out) + 2 Na(+)(out) = 4-aminobutanoate(in) + chloride(in) + 2 Na(+)(in). The catalysed reaction is taurine(out) + chloride(out) + 2 Na(+)(out) = taurine(in) + chloride(in) + 2 Na(+)(in). The enzyme catalyses beta-alanine(out) + chloride(out) + 2 Na(+)(out) = beta-alanine(in) + chloride(in) + 2 Na(+)(in). It catalyses the reaction hypotaurine(out) + chloride(out) + 2 Na(+)(out) = hypotaurine(in) + chloride(in) + 2 Na(+)(in). With respect to regulation, GABA transport is inhibited by beta-alanine, 2,3-diaminopropionic acid and SNAP-5114. Its function is as follows. Mediates sodium- and chloride-dependent transport of gamma-aminobutyric acid (GABA). Mediates transport of beta-alanine. Can also mediate transport of taurine and hypotaurine. The protein is Sodium- and chloride-dependent GABA transporter 2 (SLC6A13) of Homo sapiens (Human).